Here is a 448-residue protein sequence, read N- to C-terminus: Protein chibby homolog 2 (448 aa).

Phosphoserine is present on residues S41, S86, S89, S97, S124, S144, S148, and S150. Positions 164-198 (KECMLQEENKSLREENKALREENRMLSKENKILQV) form a coiled coil. Phosphoserine is present on residues S212 and S225. Residues 242–267 (KEDSTLQLLREENRALQQLLEQKQAY) adopt a coiled-coil conformation. The interval 270-323 (QAEDTAAPAEESKPAPSPHEEPCSPGLLQDQGSGLSSRFEEPKGPPARQEDSKE) is disordered. 2 stretches are compositionally biased toward basic and acidic residues: residues 279-291 (EESK…HEEP) and 307-323 (RFEE…DSKE). 2 positions are modified to phosphoserine: S335 and S338. Residues 356–414 (LQLLREMRQALQALLKENRLLQEENRTLQVLRAEHRGFQEENKALWENNKLKLQQKLVI) adopt a coiled-coil conformation.

The protein belongs to the chibby family. SPERT subfamily. Homodimer. Binds to NEK1. In terms of tissue distribution, testis-specific.

The chain is Protein chibby homolog 2 from Homo sapiens (Human).